The chain runs to 500 residues: UDP-N-acetylmuramoyl-L-alanyl-D-glutamate--2,6-diaminopimelate ligase (500 aa).

UDP-N-acetyl-alpha-D-muramoyl-L-alanyl-D-glutamate-binding positions include L26, S28, and 43–45 (HQV). 123-129 (GTNGKTT) contacts ATP. Residues N164, 165-166 (TT), S192, Q198, and R200 contribute to the UDP-N-acetyl-alpha-D-muramoyl-L-alanyl-D-glutamate site. K232 carries the post-translational modification N6-carboxylysine. Residues R399, 423–426 (DNPR), G474, and E478 contribute to the meso-2,6-diaminopimelate site. Residues 423–426 (DNPR) carry the Meso-diaminopimelate recognition motif motif.

The protein belongs to the MurCDEF family. MurE subfamily. Requires Mg(2+) as cofactor. Carboxylation is probably crucial for Mg(2+) binding and, consequently, for the gamma-phosphate positioning of ATP.

It is found in the cytoplasm. It carries out the reaction UDP-N-acetyl-alpha-D-muramoyl-L-alanyl-D-glutamate + meso-2,6-diaminopimelate + ATP = UDP-N-acetyl-alpha-D-muramoyl-L-alanyl-gamma-D-glutamyl-meso-2,6-diaminopimelate + ADP + phosphate + H(+). The protein operates within cell wall biogenesis; peptidoglycan biosynthesis. In terms of biological role, catalyzes the addition of meso-diaminopimelic acid to the nucleotide precursor UDP-N-acetylmuramoyl-L-alanyl-D-glutamate (UMAG) in the biosynthesis of bacterial cell-wall peptidoglycan. The protein is UDP-N-acetylmuramoyl-L-alanyl-D-glutamate--2,6-diaminopimelate ligase of Actinobacillus pleuropneumoniae serotype 5b (strain L20).